We begin with the raw amino-acid sequence, 240 residues long: 45 kDa antigen (240 aa).

Fibronectin type-III domains are found at residues 1–109 and 110–210; these read EFPD…FHTL and ANGT…KSGH.

This is 45 kDa antigen from Taenia ovis (Sheep tapeworm).